The following is a 195-amino-acid chain: GTP-dependent dephospho-CoA kinase (195 aa).

Positions 49, 50, 68, 127, and 150 each coordinate GTP.

Belongs to the GTP-dependent DPCK family.

The catalysed reaction is 3'-dephospho-CoA + GTP = GDP + CoA + H(+). Its pathway is cofactor biosynthesis; coenzyme A biosynthesis. Functionally, catalyzes the GTP-dependent phosphorylation of the 3'-hydroxyl group of dephosphocoenzyme A to form coenzyme A (CoA). The chain is GTP-dependent dephospho-CoA kinase from Methanosarcina mazei (strain ATCC BAA-159 / DSM 3647 / Goe1 / Go1 / JCM 11833 / OCM 88) (Methanosarcina frisia).